Here is a 181-residue protein sequence, read N- to C-terminus: Adenylate kinase (181 aa).

ATP is bound at residue glycine 10–threonine 15. An NMP region spans residues serine 30–valine 59. AMP contacts are provided by residues threonine 31, arginine 36, aspartate 57–valine 59, glycine 85–arginine 88, and glutamine 92. The interval glycine 126 to aspartate 132 is LID. An ATP-binding site is contributed by arginine 127. AMP is bound by residues arginine 129 and arginine 140. Glycine 166 contacts ATP.

Belongs to the adenylate kinase family. As to quaternary structure, monomer.

The protein resides in the cytoplasm. It carries out the reaction AMP + ATP = 2 ADP. The protein operates within purine metabolism; AMP biosynthesis via salvage pathway; AMP from ADP: step 1/1. Catalyzes the reversible transfer of the terminal phosphate group between ATP and AMP. Plays an important role in cellular energy homeostasis and in adenine nucleotide metabolism. The chain is Adenylate kinase from Mycobacterium leprae (strain Br4923).